A 120-amino-acid chain; its full sequence is MSNPVTITEAAALHIKDMMKEHEEENAFLRVGVKGGGCSGLSYGMGFEHEKSESDSVFDQHGITVLVDKESLDIMNGTVIDYKQSMLGGGFTIDNPNAIASCGCGSSFRTATNAGKPEEC.

This sequence belongs to the HesB/IscA family.

This is an uncharacterized protein from Bacillus subtilis (strain 168).